The chain runs to 434 residues: Septin-7 (434 aa).

Y27 is subject to Phosphotyrosine. In terms of domain architecture, Septin-type G spans 44–313 (RGFEFTLMVV…ENYRSRKLAA (270 aa)). An interaction with SEPTIN12 region spans residues 44–314 (RGFEFTLMVV…NYRSRKLAAV (271 aa)). Residues 54–61 (GESGLGKS) are G1 motif. 54 to 61 (GESGLGKS) serves as a coordination point for GTP. Phosphoserine is present on S74. GTP is bound by residues T87, G113, and 192 to 200 (KADTLTPEE). The segment at 110–113 (DTPG) is G3 motif. The tract at residues 191–194 (AKAD) is G4 motif. T225 carries the phosphothreonine modification. Residues G247 and R262 each contribute to the GTP site. The stretch at 329 to 434 (TKSPLAQMEE…EKNKKKGKIF (106 aa)) forms a coiled coil. S331 is subject to Phosphoserine. N6-acetyllysine is present on K370. Residues 377–407 (QRRHEQMKKNLEAQHKGLEEKRRQFEDEKAN) show a composition bias toward basic and acidic residues. Residues 377 to 434 (QRRHEQMKKNLEAQHKGLEEKRRQFEDEKANWEAQQRILEQQNSSRTLEKNKKKGKIF) form a disordered region. S421 bears the Phosphoserine mark. Residue T423 is modified to Phosphothreonine.

The protein belongs to the TRAFAC class TrmE-Era-EngA-EngB-Septin-like GTPase superfamily. Septin GTPase family. In terms of assembly, septins polymerize into heterooligomeric protein complexes that form filaments, and associate with cellular membranes, actin filaments and microtubules. GTPase activity is required for filament formation. Filaments are assembled from asymmetrical heterotrimers, composed of SEPTIN2, SEPTIN6 and SEPTIN7 that associate head-to-head to form a hexameric unit. Within the trimer, directly interacts with SEPTIN6, while interaction with SEPTIN2 seems indirect. In the absence of SEPTIN6, forms homodimers. Interacts directly with CENPE and links CENPE to septin filaments composed of SEPTIN2, SEPTIN6 and SEPTIN7. Interacts with SEPTIN5, SEPTIN8, SEPTIN9 and SEPTIN11. Component of a septin core octameric complex consisting of SEPTIN12, SEPTIN7, SEPTIN6 and SEPTIN2 or SEPTIN4 in the order 12-7-6-2-2-6-7-12 or 12-7-6-4-4-6-7-12 and located in the sperm annulus; the SEPTIN12:SEPTIN7 association is mediated by the respective GTP-binding domains.

Its subcellular location is the cytoplasm. The protein localises to the chromosome. It is found in the centromere. The protein resides in the kinetochore. It localises to the cytoskeleton. Its subcellular location is the spindle. The protein localises to the cleavage furrow. It is found in the midbody. The protein resides in the cilium axoneme. It localises to the cell projection. Its subcellular location is the cilium. The protein localises to the flagellum. Functionally, filament-forming cytoskeletal GTPase. Required for normal organization of the actin cytoskeleton. Required for normal progress through mitosis. Involved in cytokinesis. Required for normal association of CENPE with the kinetochore. Plays a role in ciliogenesis and collective cell movements. Forms a filamentous structure with SEPTIN12, SEPTIN6, SEPTIN2 and probably SEPTIN4 at the sperm annulus which is required for the structural integrity and motility of the sperm tail during postmeiotic differentiation. In Pan troglodytes (Chimpanzee), this protein is Septin-7.